We begin with the raw amino-acid sequence, 204 residues long: Large ribosomal subunit protein uL4 (204 aa).

A disordered region spans residues 49–76 (KTKGISDVSGTTAKPYGQKRTGRARQGS).

The protein belongs to the universal ribosomal protein uL4 family. As to quaternary structure, part of the 50S ribosomal subunit.

Functionally, one of the primary rRNA binding proteins, this protein initially binds near the 5'-end of the 23S rRNA. It is important during the early stages of 50S assembly. It makes multiple contacts with different domains of the 23S rRNA in the assembled 50S subunit and ribosome. Forms part of the polypeptide exit tunnel. The chain is Large ribosomal subunit protein uL4 from Wolbachia sp. subsp. Drosophila simulans (strain wRi).